Reading from the N-terminus, the 512-residue chain is GMP synthase [glutamine-hydrolyzing] (512 aa).

Residues 9–198 (GVLVVDFGGQ…WLSLVGAPRT (190 aa)) enclose the Glutamine amidotransferase type-1 domain. The active-site Nucleophile is Cys-87. Catalysis depends on residues His-173 and Glu-175. The GMPS ATP-PPase domain occupies 199–387 (WRPGDMVSEL…LGVPRELIWK (189 aa)). 226–232 (SGGVDST) provides a ligand contact to ATP.

It carries out the reaction XMP + L-glutamine + ATP + H2O = GMP + L-glutamate + AMP + diphosphate + 2 H(+). It functions in the pathway purine metabolism; GMP biosynthesis; GMP from XMP (L-Gln route): step 1/1. In terms of biological role, catalyzes the synthesis of GMP from XMP. In Aeropyrum pernix (strain ATCC 700893 / DSM 11879 / JCM 9820 / NBRC 100138 / K1), this protein is GMP synthase [glutamine-hydrolyzing] (guaA).